Here is a 468-residue protein sequence, read N- to C-terminus: Chromosomal replication initiator protein DnaA (468 aa).

A domain I, interacts with DnaA modulators region spans residues 1–90 (MTQEKWGLLC…NSPMRPARAA (90 aa)). Residues 91-126 (RPAAAAAAAAAAVEAPQVSAPRATDTSDVLDGLQAA) form a domain II region. Residues 127-348 (PLDPRFTFDS…GALTRLFAFA (222 aa)) are domain III, AAA+ region. Residues G171, G173, K174, and T175 each coordinate ATP. Residues 349–468 (SLVGREIDME…VEMLRRALEA (120 aa)) are domain IV, binds dsDNA.

The protein belongs to the DnaA family. As to quaternary structure, oligomerizes as a right-handed, spiral filament on DNA at oriC.

The protein localises to the cytoplasm. Plays an essential role in the initiation and regulation of chromosomal replication. ATP-DnaA binds to the origin of replication (oriC) to initiate formation of the DNA replication initiation complex once per cell cycle. Binds the DnaA box (a 9 base pair repeat at the origin) and separates the double-stranded (ds)DNA. Forms a right-handed helical filament on oriC DNA; dsDNA binds to the exterior of the filament while single-stranded (ss)DNA is stabiized in the filament's interior. The ATP-DnaA-oriC complex binds and stabilizes one strand of the AT-rich DNA unwinding element (DUE), permitting loading of DNA polymerase. After initiation quickly degrades to an ADP-DnaA complex that is not apt for DNA replication. Binds acidic phospholipids. The protein is Chromosomal replication initiator protein DnaA of Ruegeria pomeroyi (strain ATCC 700808 / DSM 15171 / DSS-3) (Silicibacter pomeroyi).